Here is a 154-residue protein sequence, read N- to C-terminus: 6,7-dimethyl-8-ribityllumazine synthase (154 aa).

Residues phenylalanine 22, 56–58 (AFE), and 80–82 (AVI) each bind 5-amino-6-(D-ribitylamino)uracil. 85–86 (AT) is a (2S)-2-hydroxy-3-oxobutyl phosphate binding site. The active-site Proton donor is histidine 88. Phenylalanine 113 serves as a coordination point for 5-amino-6-(D-ribitylamino)uracil. Arginine 127 is a binding site for (2S)-2-hydroxy-3-oxobutyl phosphate.

It belongs to the DMRL synthase family. Forms an icosahedral capsid composed of 60 subunits, arranged as a dodecamer of pentamers.

The catalysed reaction is (2S)-2-hydroxy-3-oxobutyl phosphate + 5-amino-6-(D-ribitylamino)uracil = 6,7-dimethyl-8-(1-D-ribityl)lumazine + phosphate + 2 H2O + H(+). It participates in cofactor biosynthesis; riboflavin biosynthesis; riboflavin from 2-hydroxy-3-oxobutyl phosphate and 5-amino-6-(D-ribitylamino)uracil: step 1/2. Functionally, catalyzes the formation of 6,7-dimethyl-8-ribityllumazine by condensation of 5-amino-6-(D-ribitylamino)uracil with 3,4-dihydroxy-2-butanone 4-phosphate. This is the penultimate step in the biosynthesis of riboflavin. The sequence is that of 6,7-dimethyl-8-ribityllumazine synthase from Geobacillus kaustophilus (strain HTA426).